The sequence spans 311 residues: Coproporphyrin III ferrochelatase (311 aa).

Fe-coproporphyrin III-binding positions include Y12, R29, 45 to 46 (RY), S53, and Y124. 2 residues coordinate Fe(2+): H182 and E263.

It belongs to the ferrochelatase family.

The protein resides in the cytoplasm. The catalysed reaction is Fe-coproporphyrin III + 2 H(+) = coproporphyrin III + Fe(2+). It participates in porphyrin-containing compound metabolism; protoheme biosynthesis. Its function is as follows. Involved in coproporphyrin-dependent heme b biosynthesis. Catalyzes the insertion of ferrous iron into coproporphyrin III to form Fe-coproporphyrin III. The protein is Coproporphyrin III ferrochelatase of Bacillus mycoides (strain KBAB4) (Bacillus weihenstephanensis).